A 308-amino-acid chain; its full sequence is UPF0282 protein PYRAB09800 (308 aa).

Belongs to the UPF0282 family.

The polypeptide is UPF0282 protein PYRAB09800 (Pyrococcus abyssi (strain GE5 / Orsay)).